The following is an 882-amino-acid chain: MQTRVSSPFISRALSSSSNLNELRRIHALVISLGLDSSDFFSGKLIDKYSHFREPASSLSVFRRVSPAKNVYLWNSIIRAFSKNGLFPEALEFYGKLRESKVSPDKYTFPSVIKACAGLFDAEMGDLVYEQILDMGFESDLFVGNALVDMYSRMGLLTRARQVFDEMPVRDLVSWNSLISGYSSHGYYEEALEIYHELKNSWIVPDSFTVSSVLPAFGNLLVVKQGQGLHGFALKSGVNSVVVVNNGLVAMYLKFRRPTDARRVFDEMDVRDSVSYNTMICGYLKLEMVEESVRMFLENLDQFKPDLLTVSSVLRACGHLRDLSLAKYIYNYMLKAGFVLESTVRNILIDVYAKCGDMITARDVFNSMECKDTVSWNSIISGYIQSGDLMEAMKLFKMMMIMEEQADHITYLMLISVSTRLADLKFGKGLHSNGIKSGICIDLSVSNALIDMYAKCGEVGDSLKIFSSMGTGDTVTWNTVISACVRFGDFATGLQVTTQMRKSEVVPDMATFLVTLPMCASLAAKRLGKEIHCCLLRFGYESELQIGNALIEMYSKCGCLENSSRVFERMSRRDVVTWTGMIYAYGMYGEGEKALETFADMEKSGIVPDSVVFIAIIYACSHSGLVDEGLACFEKMKTHYKIDPMIEHYACVVDLLSRSQKISKAEEFIQAMPIKPDASIWASVLRACRTSGDMETAERVSRRIIELNPDDPGYSILASNAYAALRKWDKVSLIRKSLKDKHITKNPGYSWIEVGKNVHVFSSGDDSAPQSEAIYKSLEILYSLMAKEGYIPDPREVSQNLEEEEEKRRLICGHSERLAIAFGLLNTEPGTPLQVMKNLRVCGDCHEVTKLISKIVGREILVRDANRFHLFKDGTCSCKDRW.

PPR repeat units lie at residues 3–37 (TRVS…GLDS), 38–68 (SDFF…VSPA), 70–104 (NVYL…KVSP), 105–139 (DKYT…GFES), 140–170 (DLFV…MPVR), 171–205 (DLVS…WIVP), 206–240 (DSFT…GVNS), 241–271 (VVVV…MDVR), 272–307 (DSVS…KPDL), 309–340 (TVSS…GFVL), 341–371 (ESTV…MECK), 372–406 (DTVS…EEQA), 407–441 (DHIT…GICI), 442–472 (DLSV…MGTG), 473–507 (DTVT…EVVP), 508–542 (DMAT…GYES), 543–573 (ELQI…MSRR), 574–608 (DVVT…GIVP), 609–639 (DSVV…MKTH), and 645–675 (MIEH…MPIK). A type E motif region spans residues 680–755 (IWASVLRACR…NPGYSWIEVG (76 aa)). The tract at residues 756-786 (KNVHVFSSGDDSAPQSEAIYKSLEILYSLMA) is type E(+) motif. The tract at residues 787–882 (KEGYIPDPRE…DGTCSCKDRW (96 aa)) is type DYW motif.

This sequence belongs to the PPR family. PCMP-H subfamily.

The sequence is that of Pentatricopeptide repeat-containing protein At3g03580 (PCMP-H23) from Arabidopsis thaliana (Mouse-ear cress).